Consider the following 953-residue polypeptide: Anion exchange protein 4 (953 aa).

Residues 20–41 are disordered; sequence SEQLDGDLGPGSGLDGPSDIDN. Helical transmembrane passes span 385–405, 413–433, 470–490, and 501–521; these read AVLYIYLATVTNAITFGGLLG, GVLESFLGTAVAGATFCLMAG, VGIWVATFCLALVATEASLLV, and FCALISLIFIYDAVGKMLNLI. The membrane (anion exchange) stretch occupies residues 385–953; sequence AVLYIYLATV…KAPEINISVN (569 aa). Asn-546 and Asn-570 each carry an N-linked (GlcNAc...) asparagine glycan. 7 consecutive transmembrane segments (helical) span residues 594-614, 635-655, 682-702, 728-748, 785-805, 807-827, and 869-889; these read VPDIAFFSLLLFFTSFLCAIA, FSSVLAILLGCGLDAFLGLAT, PWWLSVAAALPALLLSILIFM, LFCVAVLMLFTSALGLPWYVS, GLVVFILTGVSIFLAPVLKFI, MPVLYGIFLYMGVAALSSMQF, and LWVIKSTPAAIVFPLMLLGLV. Over residues 916 to 927 the composition is skewed to basic and acidic residues; that stretch reads KTIPENRPEPEH. The tract at residues 916 to 938 is disordered; sequence KTIPENRPEPEHLFSGNDSENSE. Asn-932 and Asn-949 each carry an N-linked (GlcNAc...) asparagine glycan.

This sequence belongs to the anion exchanger (TC 2.A.31) family. In terms of tissue distribution, expressed in kidney and gastrointestinal tract. In kidney, it is highly expressed in the cortex, expressed at intermediate level in the outer medulla and not expressed in the inner medulla. It is expressed in the cecum, while it is absent in other segments of gastrointestinal tract. Highly expressed in the cortical collecting duct (CCD). Expressed in both alpha-intercalated cells and beta-intercalated cells in the CCD (at protein level).

It is found in the basolateral cell membrane. It catalyses the reaction 2 hydrogencarbonate(out) + chloride(in) + Na(+)(out) = 2 hydrogencarbonate(in) + chloride(out) + Na(+)(in). The catalysed reaction is K(+)(in) + 2 hydrogencarbonate(in) + chloride(out) = K(+)(out) + 2 hydrogencarbonate(out) + chloride(in). The enzyme catalyses Li(+)(in) + 2 hydrogencarbonate(in) + chloride(out) = Li(+)(out) + 2 hydrogencarbonate(out) + chloride(in). It carries out the reaction Rb(+)(in) + 2 hydrogencarbonate(in) + chloride(out) = Rb(+)(out) + 2 hydrogencarbonate(out) + chloride(in). It catalyses the reaction Cs(+)(in) + 2 hydrogencarbonate(in) + chloride(out) = Cs(+)(out) + 2 hydrogencarbonate(out) + chloride(in). Its activity is regulated as follows. 4,4'-diisothiocyanatodihydrostilbene-2,2'- disulfonic acid (H2DIDS) potently inhibits chloride/hydrogencarbonate antiporter activity with 50% inhibition at about 5 uM. Completely inhibits chloride/hydrogencarbonate antiporter activity at 200 uM of 4,4'-diisothiocyano-trans-stilbene-2,2'-disulfonic acid (DIDS). Electroneutral Cl(-)/HCO3(-) antiporter that favors chloride ion entry and efflux of hydrogencarbonate and sodium ion across the basolateral membrane and may participate in salivary secretion. Also mediates Cl(-)/HCO3(-) exchange activity in the presence of K(+) as well as Cs(+), Li(+), and Rb(+). Does not contribute to Cl(-)/HCO3(-) exchanger in the apical membrane of the upper villous epithelium. In Rattus norvegicus (Rat), this protein is Anion exchange protein 4.